Reading from the N-terminus, the 210-residue chain is Glutathione S-transferase P (210 aa).

Positions 2–81 (PPYTVVYFPV…HLGRTLGLYG (80 aa)) constitute a GST N-terminal domain. Residue Tyr4 is modified to Phosphotyrosine; by EGFR. Glutathione contacts are provided by residues Tyr8, Arg14, Trp39, Lys45, and 52–53 (QL). The residue at position 62 (Thr62) is a Phosphothreonine. Position 65–66 (65–66 (QS)) interacts with glutathione. In terms of domain architecture, GST C-terminal spans 83-204 (DQREAALVDM…ASPEHVNLPI (122 aa)). N6-succinyllysine occurs at positions 103 and 116. Residue Lys128 is modified to N6-acetyllysine.

This sequence belongs to the GST superfamily. Pi family. Homodimer. Interacts with CDK5.

It localises to the cytoplasm. Its subcellular location is the mitochondrion. The protein localises to the nucleus. The catalysed reaction is RX + glutathione = an S-substituted glutathione + a halide anion + H(+). It carries out the reaction prostaglandin J2 + glutathione = prostaglandin J2-S-(R)-glutathione. The enzyme catalyses prostaglandin J2 + glutathione = prostaglandin J2-S-(S)-glutathione. It catalyses the reaction prostaglandin A2 + glutathione = prostaglandin A2-S-(S)-glutathione. The catalysed reaction is 11(S)-hydroxy-14(S),15(S)-epoxy-(5Z,8Z,12E)-eicosatrienoate + glutathione = (11S,15S)-dihydroxy-14(R)-S-glutathionyl-(5Z,8Z,12E)-eicosatrienoate. In terms of biological role, conjugation of reduced glutathione to a wide number of exogenous and endogenous hydrophobic electrophiles. Involved in the formation of glutathione conjugates of both prostaglandin A2 (PGA2) and prostaglandin J2 (PGJ2). Participates in the formation of novel hepoxilin regioisomers. Negatively regulates CDK5 activity via p25/p35 translocation to prevent neurodegeneration. In Macaca mulatta (Rhesus macaque), this protein is Glutathione S-transferase P (GSTP1).